A 758-amino-acid chain; its full sequence is 5-methyltetrahydropteroyltriglutamate--homocysteine methyltransferase (758 aa).

Residues 17-20 and Lys-117 contribute to the 5-methyltetrahydropteroyltri-L-glutamate site; that span reads RELK. Residues 434–436 and Glu-487 each bind L-homocysteine; that span reads IGS. L-methionine contacts are provided by residues 434–436 and Glu-487; that span reads IGS. Residues 518–519 and Trp-564 contribute to the 5-methyltetrahydropteroyltri-L-glutamate site; that span reads RC. Asp-602 is an L-homocysteine binding site. Asp-602 contributes to the L-methionine binding site. Glu-608 contacts 5-methyltetrahydropteroyltri-L-glutamate. The Zn(2+) site is built by His-644, Cys-646, and Glu-668. Catalysis depends on His-697, which acts as the Proton donor. Cys-729 lines the Zn(2+) pocket.

Belongs to the vitamin-B12 independent methionine synthase family. It depends on Zn(2+) as a cofactor.

The enzyme catalyses 5-methyltetrahydropteroyltri-L-glutamate + L-homocysteine = tetrahydropteroyltri-L-glutamate + L-methionine. It participates in amino-acid biosynthesis; L-methionine biosynthesis via de novo pathway; L-methionine from L-homocysteine (MetE route): step 1/1. In terms of biological role, catalyzes the transfer of a methyl group from 5-methyltetrahydrofolate to homocysteine resulting in methionine formation. The sequence is that of 5-methyltetrahydropteroyltriglutamate--homocysteine methyltransferase from Yersinia enterocolitica serotype O:8 / biotype 1B (strain NCTC 13174 / 8081).